The primary structure comprises 149 residues: Active regulator of SIRT1 (149 aa).

Residues 1–64 are disordered; the sequence is MSVSLLRKGL…GLRHDQKATA (64 aa). Residues 8–19 are compositionally biased toward basic and acidic residues; the sequence is KGLDLLREERSG. Residues 30 to 41 are compositionally biased toward low complexity; that stretch reads SSKPKPCLSSSK. A compositionally biased stretch (basic residues) spans 43 to 52; that stretch reads GMRKQLRRLK.

The protein belongs to the AROS family. Part of the small subunit (SSU) processome, composed of more than 70 proteins and the RNA chaperone small nucleolar RNA (snoRNA) U3.

It localises to the nucleus. Its subcellular location is the nucleolus. Part of the small subunit (SSU) processome, first precursor of the small eukaryotic ribosomal subunit. During the assembly of the SSU processome in the nucleolus, many ribosome biogenesis factors, an RNA chaperone and ribosomal proteins associate with the nascent pre-rRNA and work in concert to generate RNA folding, modifications, rearrangements and cleavage as well as targeted degradation of pre-ribosomal RNA by the RNA exosome. Acts as a chaperone that specifically mediates the integration of RPS19 in state post-A1. Direct regulator of SIRT1. The protein is Active regulator of SIRT1 (rps19bp1) of Xenopus tropicalis (Western clawed frog).